Consider the following 459-residue polypeptide: Zinc finger protein ZFP2 (459 aa).

13 consecutive C2H2-type zinc fingers follow at residues 100–122, 128–150, 156–178, 184–206, 212–234, 240–262, 268–290, 296–318, 324–346, 352–374, 380–402, 408–430, and 436–458; these read YGCDECGKTFRQSSSLLKHQRIH, YTCNVCDKHFIERSSLTVHQRTH, YKCHECGKAFSQSMNLTVHQRTH, YQCKECGKAFRKNSSLIQHERIH, YKCHDCGKAFTQSMNLTVHQRTH, YECNQCGKAFSQSMHLIVHQRSH, YECSECGKAFSKSSTLTLHQRNH, YKCNKCGKSFSQSTYLIEHQRLH, FECNQCGKAFSKNSSLTQHRRIH, YECMICGKHFTGRSSLTVHQVIH, YECTECGKAFSQSAYLIEHQRIH, YECDQCGKAFIKNSSLIVHQRIH, and YQCNECGKSFSRSTNLTRHQRTH.

This sequence belongs to the krueppel C2H2-type zinc-finger protein family.

It localises to the nucleus. Probable transcription factor involved in neuronal differentiation and/or phenotypic maintenance. The protein is Zinc finger protein ZFP2 (Zfp2) of Mus musculus (Mouse).